The chain runs to 433 residues: Serine/threonine-protein kinase Sgk1 (433 aa).

Positions 66–92 are disordered; the sequence is QDVELMNSNPSPPPSPSQQINLGPSSN. Residues 83 to 92 show a composition bias toward polar residues; it reads QQINLGPSSN. The Protein kinase domain maps to 100 to 357; sequence FDFLKVIGKG…FTEIKNHMFF (258 aa). Residues 106–114 and Lys129 each bind ATP; that span reads IGKGSFGKV. The active-site Proton acceptor is the Asp224. In terms of domain architecture, AGC-kinase C-terminal spans 358–433; it reads SPINWDDLNA…SYAPAMDSYL (76 aa).

This sequence belongs to the protein kinase superfamily. AGC Ser/Thr protein kinase family.

The protein resides in the cytoplasm. It is found in the nucleus. The protein localises to the endoplasmic reticulum. It catalyses the reaction L-seryl-[protein] + ATP = O-phospho-L-seryl-[protein] + ADP + H(+). The catalysed reaction is L-threonyl-[protein] + ATP = O-phospho-L-threonyl-[protein] + ADP + H(+). Functionally, protein kinase that may play an important role in cellular stress response. May be involved in the regulation of processes such as cell survival, neuronal excitability and renal sodium excretion. In Danio rerio (Zebrafish), this protein is Serine/threonine-protein kinase Sgk1 (sgk1).